We begin with the raw amino-acid sequence, 329 residues long: MVAVTVYLMVILAQAFAGPCTPNKADVILVYCYPRTIITKIPECPYGWEVNQLALGGICYNGIHDSGYYQFTIPDLSPKNKSYCGTQSEFKNPVYHFYNSIVSNDSTVIVKSQPVNYSFTCTYNANYLVNQAAFDQRVATIHVKNGSSGSFESQLSLNFYSNAKFSSIKEAPFVVETSEIGSDIFAGVEAKGLSDRFKVVLNNCWATPSSEYFYQVHWPLITKGCASDFSIVVHENGKTNRATFQFNAFRFQNIPKLSKVWLHCETHVCDSEKFSCPVTCDKRKQRMEQTGGVLVAEISVRNKGLSRFYMLSDVIFHLLFAIGFCAILL.

An N-terminal signal peptide occupies residues 1–17; it reads MVAVTVYLMVILAQAFA. Residues 19–287 enclose the ZP domain; it reads PCTPNKADVI…VTCDKRKQRM (269 aa). Residues Asn-80, Asn-104, Asn-116, and Asn-145 are each glycosylated (N-linked (GlcNAc...) asparagine). Cys-204 and Cys-264 are disulfide-bonded. A lipid anchor (GPI-anchor amidated glycine) is attached at Gly-304. A propeptide spans 305–329 (removed in mature form); the sequence is LSRFYMLSDVIFHLLFAIGFCAILL.

As to quaternary structure, may form homomeric filament after self-association or heteromeric filament after association with alpha-tectorin. The N-terminus is blocked. In terms of processing, N-glycosylated. Post-translationally, the presence of a hydrophobic C-terminus preceded by a potential cleavage site strongly suggests that tectorins are synthesized as glycosylphosphatidylinositol-linked, membrane-bound precursors. Tectorins are targeted to the apical surface of the inner ear epithelia by the lipid and proteolytically released into the extracellular compartment. As to expression, exclusively expressed in the inner ear, where it is found in basilar papilla, clear cells, supporting cells, cuboidal cells and the lagena macula.

Its subcellular location is the cell membrane. It localises to the secreted. It is found in the extracellular space. The protein resides in the extracellular matrix. Its function is as follows. One of the major non-collagenous components of the tectorial membrane. The tectorial membrane is an extracellular matrix of the inner ear that covers the neuroepithelium of the cochlea and contacts the stereocilia bundles of specialized sensory hair cells. Sound induces movement of these hair cells relative to the tectorial membrane, deflects the stereocilia and leads to fluctuations in hair-cell membrane potential, transducing sound into electrical signals. The chain is Beta-tectorin (TECTB) from Gallus gallus (Chicken).